Consider the following 192-residue polypeptide: MIFQKKRKTAETELSIILADDKRTSEINTGVGFLNHMLTLFTFHSGLSIIIEANGDTEVDDHHVTEDIGIVLGQLLLDMIRERKSFQRYGVSYIPMDETLSRAVVDISGRPYLSFNATLSKEKVGTFDSELVEEFFRALIINARLTTHIDLLRGGNTHHEIEAIFKSFARALKMALSENDNDNIPSSKGVIE.

The protein belongs to the imidazoleglycerol-phosphate dehydratase family.

It is found in the cytoplasm. The enzyme catalyses D-erythro-1-(imidazol-4-yl)glycerol 3-phosphate = 3-(imidazol-4-yl)-2-oxopropyl phosphate + H2O. It participates in amino-acid biosynthesis; L-histidine biosynthesis; L-histidine from 5-phospho-alpha-D-ribose 1-diphosphate: step 6/9. In Staphylococcus saprophyticus subsp. saprophyticus (strain ATCC 15305 / DSM 20229 / NCIMB 8711 / NCTC 7292 / S-41), this protein is Imidazoleglycerol-phosphate dehydratase.